The chain runs to 85 residues: Large ribosomal subunit protein bL27 (85 aa).

The tract at residues 1–20 (MAHKKAGGSTRNGRDSEAKR) is disordered.

It belongs to the bacterial ribosomal protein bL27 family.

The protein is Large ribosomal subunit protein bL27 of Enterobacter sp. (strain 638).